The following is a 637-amino-acid chain: Early transcription factor 70 kDa subunit (637 aa).

A Helicase ATP-binding domain is found at 32 to 185 (RTIIDENRSV…GHIIDLMSEE (154 aa)). 45 to 52 (HIMGSGKT) lines the ATP pocket. A DEXH box motif is present at residues 135-138 (DEAH). In terms of domain architecture, Helicase C-terminal spans 327–507 (KFKYFINRIQ…VLPFDIKKLL (181 aa)).

It belongs to the helicase family. VETF subfamily. In terms of assembly, heterodimer of a 70 kDa and a 82 kDa subunit. Part of the early transcription complex composed of ETF, RAP94/OPG109, and the DNA-directed RNA polymerase.

It localises to the virion. Acts with RNA polymerase to initiate transcription from early gene promoters. Is recruited by the RPO-associated protein of 94 kDa RAP94/OPG109 to form the early transcription complex, which also contains the core RNA polymerase. ETF heterodimer binds to early gene promoters. In Homo sapiens (Human), this protein is Early transcription factor 70 kDa subunit (OPG118).